Consider the following 260-residue polypeptide: 3'-5' ssDNA/RNA exonuclease TatD (260 aa).

Residues Glu-92, His-128, and His-153 each contribute to the a divalent metal cation site.

It belongs to the metallo-dependent hydrolases superfamily. TatD-type hydrolase family. TatD subfamily. As to quaternary structure, monomer. It depends on Mg(2+) as a cofactor.

It is found in the cytoplasm. In terms of biological role, 3'-5' exonuclease that prefers single-stranded DNA and RNA. May play a role in the H(2)O(2)-induced DNA damage repair. This chain is 3'-5' ssDNA/RNA exonuclease TatD, found in Pantoea ananatis (strain LMG 20103).